Here is a 201-residue protein sequence, read N- to C-terminus: NADH-ubiquinone oxidoreductase chain 6 (201 aa).

The next 5 membrane-spanning stretches (helical) occupy residues 4 to 24 (LVLF…VISV), 28 to 48 (VFSV…LLLL), 55 to 75 (LLFL…VVMI), 88 to 108 (FYYA…IFII), and 151 to 171 (LFIL…ILTL).

Belongs to the complex I subunit 6 family.

The protein resides in the mitochondrion membrane. The enzyme catalyses a ubiquinone + NADH + 5 H(+)(in) = a ubiquinol + NAD(+) + 4 H(+)(out). Its function is as follows. Core subunit of the mitochondrial membrane respiratory chain NADH dehydrogenase (Complex I) that is believed to belong to the minimal assembly required for catalysis. Complex I functions in the transfer of electrons from NADH to the respiratory chain. The immediate electron acceptor for the enzyme is believed to be ubiquinone. This chain is NADH-ubiquinone oxidoreductase chain 6 (ND6), found in Cyanidium caldarium (Red alga).